A 454-amino-acid polypeptide reads, in one-letter code: tRNA(Ile)-lysidine synthase (454 aa).

31 to 36 (SGGADS) contributes to the ATP binding site.

Belongs to the tRNA(Ile)-lysidine synthase family.

The protein resides in the cytoplasm. It carries out the reaction cytidine(34) in tRNA(Ile2) + L-lysine + ATP = lysidine(34) in tRNA(Ile2) + AMP + diphosphate + H(+). Ligates lysine onto the cytidine present at position 34 of the AUA codon-specific tRNA(Ile) that contains the anticodon CAU, in an ATP-dependent manner. Cytidine is converted to lysidine, thus changing the amino acid specificity of the tRNA from methionine to isoleucine. In Porphyromonas gingivalis (strain ATCC BAA-308 / W83), this protein is tRNA(Ile)-lysidine synthase.